Reading from the N-terminus, the 617-residue chain is Protein DWARF AND LOW-TILLERING (617 aa).

Disordered regions lie at residues Lys29 to Asp92 and Pro159 to Ala206. A compositionally biased stretch (low complexity) spans Lys171–Ser187. The GRAS domain occupies Gly208–Thr594. The segment at Leu215–Asp295 is leucine repeat I (LRI). A VHIID region spans residues Leu301–Gly366. Positions Val332 to Asp336 match the VHIID motif. Residues Glu376–Met408 are leucine repeat II (LRII). A PFYRE region spans residues Val417 to Asn508. The tract at residues Ala511–Thr594 is SAW. Positions Ala596–Ser617 are disordered. A compositionally biased stretch (low complexity) spans Ser603–Ser617.

Belongs to the GRAS family. Interacts with GSK2. Interacts with SMOS1 (via C-terminus). Phosphorylated on serine and threonine residues by GSK2. Dephosphorylated during response to brassinosteroid. As to expression, expressed in the shoot apical meristem (SAM) and elongating cells of young seedlings. Expressed in leaf joints, culms, internodes, stems, young panicles, primary roots and lateral roots.

Its subcellular location is the nucleus. Functionally, probable transcription factor that acts as a positive regulator of brassinosteroid (BR) signaling. Functions downstream of BRI1 and GSK2 to modulate BR responses. Acts as a direct target of GSK2 kinase to mediate BR responses. Involved in feedback inhibition of BR biosynthetic genes. Repressed by BZR1. Cooperatively functions in a transactivating complex with SMOS1 to enhance the transcription of the SMOS1 target PHI-1, and regulate plant organ size. Interaction between SMOS1 and DLT is a crosstalk point for auxin and brassinosteroid signaling. The protein is Protein DWARF AND LOW-TILLERING of Oryza sativa subsp. japonica (Rice).